Here is a 152-residue protein sequence, read N- to C-terminus: Large ribosomal subunit protein bL9 (152 aa).

Belongs to the bacterial ribosomal protein bL9 family.

Its function is as follows. Binds to the 23S rRNA. This is Large ribosomal subunit protein bL9 from Nostoc sp. (strain PCC 7120 / SAG 25.82 / UTEX 2576).